Here is a 483-residue protein sequence, read N- to C-terminus: Aspartyl/glutamyl-tRNA(Asn/Gln) amidotransferase subunit B (483 aa).

This sequence belongs to the GatB/GatE family. GatB subfamily. In terms of assembly, heterotrimer of A, B and C subunits.

It carries out the reaction L-glutamyl-tRNA(Gln) + L-glutamine + ATP + H2O = L-glutaminyl-tRNA(Gln) + L-glutamate + ADP + phosphate + H(+). The catalysed reaction is L-aspartyl-tRNA(Asn) + L-glutamine + ATP + H2O = L-asparaginyl-tRNA(Asn) + L-glutamate + ADP + phosphate + 2 H(+). Its function is as follows. Allows the formation of correctly charged Asn-tRNA(Asn) or Gln-tRNA(Gln) through the transamidation of misacylated Asp-tRNA(Asn) or Glu-tRNA(Gln) in organisms which lack either or both of asparaginyl-tRNA or glutaminyl-tRNA synthetases. The reaction takes place in the presence of glutamine and ATP through an activated phospho-Asp-tRNA(Asn) or phospho-Glu-tRNA(Gln). This is Aspartyl/glutamyl-tRNA(Asn/Gln) amidotransferase subunit B from Marinobacter nauticus (strain ATCC 700491 / DSM 11845 / VT8) (Marinobacter aquaeolei).